Reading from the N-terminus, the 183-residue chain is DELTA-miturgitoxin-Cp1b (183 aa).

The first 20 residues, 1–20 (MKFSLFFSVFFLAVLHACLS), serve as a signal peptide directing secretion. A propeptide spanning residues 21–47 (ESEIDLEDEEHFMSSDSFLSEIQDESR) is cleaved from the precursor. A Processing quadruplet motif motif is present at residues 44 to 47 (DESR). Cystine bridges form between Cys-51–Cys-66, Cys-58–Cys-75, Cys-65–Cys-88, Cys-77–Cys-86, Cys-115–Cys-130, Cys-122–Cys-139, Cys-129–Cys-157, and Cys-141–Cys-155. Residues 164–177 (QAIEGALRIAKKLI) are predicted alpha-helix. A Tryptophan amide modification is found at Trp-181.

This sequence belongs to the neurotoxin 19 (CSTX) family. Double-CSTX subfamily. Post-translationally, cleavage of the propeptide depends on the processing quadruplet motif (XXXR, with at least one of X being E). In terms of tissue distribution, expressed by the venom gland.

It is found in the secreted. The protein resides in the target cell membrane. Its function is as follows. Spider venom toxin that exhibits cytolytic activity by forming an alpha-helix across the membrane. Lethal to insect larvae. Causes instant paralysis and death in the larvae of the flesh fly (S.carnaria) at doses of 20 ug/g, at doses of less than 10 ug/g causes reversible paralysis. Has cytolytic activity against insect Sf9 cells. Causes stable and irreversible depolarization of fly muscle fibers, leading to contracture at higher toxin concentrations. Destabilizes membranes. The protein is DELTA-miturgitoxin-Cp1b of Cheiracanthium punctorium (Yellow sac spider).